Consider the following 121-residue polypeptide: Small ribosomal subunit protein uS13 (121 aa).

The segment at 94–121 (GLPVRGQRTRTNARTRKGPRKGAAALKK) is disordered.

Belongs to the universal ribosomal protein uS13 family. Part of the 30S ribosomal subunit. Forms a loose heterodimer with protein S19. Forms two bridges to the 50S subunit in the 70S ribosome.

Functionally, located at the top of the head of the 30S subunit, it contacts several helices of the 16S rRNA. In the 70S ribosome it contacts the 23S rRNA (bridge B1a) and protein L5 of the 50S subunit (bridge B1b), connecting the 2 subunits; these bridges are implicated in subunit movement. Contacts the tRNAs in the A and P-sites. In Verminephrobacter eiseniae (strain EF01-2), this protein is Small ribosomal subunit protein uS13.